A 91-amino-acid polypeptide reads, in one-letter code: Small ribosomal subunit protein uS15 (91 aa).

The protein belongs to the universal ribosomal protein uS15 family. Part of the 30S ribosomal subunit. Forms a bridge to the 50S subunit in the 70S ribosome, contacting the 23S rRNA.

Functionally, one of the primary rRNA binding proteins, it binds directly to 16S rRNA where it helps nucleate assembly of the platform of the 30S subunit by binding and bridging several RNA helices of the 16S rRNA. In terms of biological role, forms an intersubunit bridge (bridge B4) with the 23S rRNA of the 50S subunit in the ribosome. This Synechococcus sp. (strain JA-2-3B'a(2-13)) (Cyanobacteria bacterium Yellowstone B-Prime) protein is Small ribosomal subunit protein uS15.